The sequence spans 182 residues: CDP-diacylglycerol--glycerol-3-phosphate 3-phosphatidyltransferase (182 aa).

At 1 to 12 (MQLNIPTWLTLF) the chain is on the cytoplasmic side. Residues 13–37 (RVVLIPFFVLAFYLPFVWAPMVCAI) traverse the membrane as a helical segment. The Periplasmic portion of the chain corresponds to 38–60 (IFVFAAATDWFDGFLARRWKQTT). Residues 61-81 (RFGAFLDPVADKVMVAIALVL) traverse the membrane as a helical segment. Residues 82–86 (VAEHY) lie on the Cytoplasmic side of the membrane. Residues 87-107 (HVWWITLPAATMIAREIIISS) traverse the membrane as a helical segment. Residues 108–145 (LREWMAEIGKRSSVAVSWIGKVKTTAQMGSLVGLLWRP) lie on the Periplasmic side of the membrane. The helical transmembrane segment at 146–168 (DHNIELASFVLLYIAAVLTFWSM) threads the bilayer. The Cytoplasmic segment spans residues 169 to 181 (FQYLNAAWKDLLE).

This sequence belongs to the CDP-alcohol phosphatidyltransferase class-I family.

The protein localises to the cell inner membrane. It catalyses the reaction a CDP-1,2-diacyl-sn-glycerol + sn-glycerol 3-phosphate = a 1,2-diacyl-sn-glycero-3-phospho-(1'-sn-glycero-3'-phosphate) + CMP + H(+). It functions in the pathway phospholipid metabolism; phosphatidylglycerol biosynthesis; phosphatidylglycerol from CDP-diacylglycerol: step 1/2. Functionally, catalyzes the conversion of cytidine diphosphate diacylglycerol (CDP-DG) and glycerol 3-phosphate into phosphatidylglycerol. Essential for the synthesis of anionic phospholipids, thereby playing a role in balancing the ratio of zwitterionic and anionic phospholipids, which is thought to be important for normal membrane function. This chain is CDP-diacylglycerol--glycerol-3-phosphate 3-phosphatidyltransferase, found in Yersinia enterocolitica serotype O:8 / biotype 1B (strain NCTC 13174 / 8081).